The sequence spans 329 residues: Major outer membrane protein P.IB (329 aa).

The N-terminal stretch at 1-19 (MKKSLIALTLAALPVAAMA) is a signal peptide.

Belongs to the Gram-negative porin family. Homotrimer.

Its subcellular location is the cell outer membrane. Functionally, serves as a slightly cation selective porin. The polypeptide is Major outer membrane protein P.IB (porB) (Neisseria meningitidis serogroup A / serotype 4A (strain DSM 15465 / Z2491)).